The primary structure comprises 145 residues: Photosystem I reaction center subunit VI-2, chloroplastic (145 aa).

Residues 1–50 constitute a chloroplast transit peptide; sequence MASFATIAAVQPSAAVKGLGGSSLAGAKLFIKPSRQSFKTKSTRAGAVVA. The chain crosses the membrane as a helical span at residues 102–118; that stretch reads LLLKFLILGGGSLLTYV. Residues 126 to 145 form a disordered region; sequence VLPIKRGPQEPPKLGPRGKL.

It belongs to the psaH family.

The protein resides in the plastid. It localises to the chloroplast thylakoid membrane. Its function is as follows. Possible role could be the docking of the LHC I antenna complex to the core complex. The sequence is that of Photosystem I reaction center subunit VI-2, chloroplastic (PSAH2) from Arabidopsis thaliana (Mouse-ear cress).